The following is a 189-amino-acid chain: MKNVSPTYLKHQFLIAMPHMADPNFAQTLTYIVEHTAKGAMGLVINRPQELNLADILEQLRPEVDPPARCQGVPIYIGGPVQTDRGFVLHPTGPKFQATVDLEGVSLSTSQDVLFAIADGVGPEQSVITLGYAGWEAGQLEAELASNAWLTCPFDAEILFNTPSELRLEAAAAKLRVNLNLLTSQAGHA.

Belongs to the UPF0301 (AlgH) family.

The chain is UPF0301 protein PFLU_5755 from Pseudomonas fluorescens (strain SBW25).